A 184-amino-acid chain; its full sequence is ATP synthase subunit b, chloroplastic (184 aa).

A helical transmembrane segment spans residues 27–49 (FATNPINLSVVLGVLIFFGKGVL).

It belongs to the ATPase B chain family. F-type ATPases have 2 components, F(1) - the catalytic core - and F(0) - the membrane proton channel. F(1) has five subunits: alpha(3), beta(3), gamma(1), delta(1), epsilon(1). F(0) has four main subunits: a(1), b(1), b'(1) and c(10-14). The alpha and beta chains form an alternating ring which encloses part of the gamma chain. F(1) is attached to F(0) by a central stalk formed by the gamma and epsilon chains, while a peripheral stalk is formed by the delta, b and b' chains.

The protein localises to the plastid. Its subcellular location is the chloroplast thylakoid membrane. Functionally, f(1)F(0) ATP synthase produces ATP from ADP in the presence of a proton or sodium gradient. F-type ATPases consist of two structural domains, F(1) containing the extramembraneous catalytic core and F(0) containing the membrane proton channel, linked together by a central stalk and a peripheral stalk. During catalysis, ATP synthesis in the catalytic domain of F(1) is coupled via a rotary mechanism of the central stalk subunits to proton translocation. Its function is as follows. Component of the F(0) channel, it forms part of the peripheral stalk, linking F(1) to F(0). This Ipomoea purpurea (Common morning glory) protein is ATP synthase subunit b, chloroplastic.